A 320-amino-acid polypeptide reads, in one-letter code: ATP-dependent 6-phosphofructokinase (320 aa).

Glycine 12 contacts ATP. An ADP-binding site is contributed by 22–26 (RGVVR). ATP is bound by residues 73-74 (RF) and 103-106 (GDGS). Mg(2+) is bound at residue aspartate 104. Residue 126-128 (TID) coordinates substrate. The active-site Proton acceptor is aspartate 128. Residue arginine 155 participates in ADP binding. Substrate contacts are provided by residues arginine 163 and 170–172 (MGR). ADP-binding positions include 186–188 (GCE), lysine 212, and 214–216 (KKH). Substrate contacts are provided by residues glutamate 223, arginine 244, and 250–253 (HIQR).

The protein belongs to the phosphofructokinase type A (PFKA) family. ATP-dependent PFK group I subfamily. Prokaryotic clade 'B1' sub-subfamily. In terms of assembly, homotetramer. Mg(2+) is required as a cofactor.

It is found in the cytoplasm. It catalyses the reaction beta-D-fructose 6-phosphate + ATP = beta-D-fructose 1,6-bisphosphate + ADP + H(+). It functions in the pathway carbohydrate degradation; glycolysis; D-glyceraldehyde 3-phosphate and glycerone phosphate from D-glucose: step 3/4. With respect to regulation, allosterically activated by ADP and other diphosphonucleosides, and allosterically inhibited by phosphoenolpyruvate. Catalyzes the phosphorylation of D-fructose 6-phosphate to fructose 1,6-bisphosphate by ATP, the first committing step of glycolysis. This chain is ATP-dependent 6-phosphofructokinase, found in Aliivibrio salmonicida (strain LFI1238) (Vibrio salmonicida (strain LFI1238)).